We begin with the raw amino-acid sequence, 125 residues long: uncharacterized protein (125 aa).

The transit peptide at 1-46 (MFFDTKVLNYPTIHKSISMASTMQRTSSSAASNERQLSQLQRRAPS) directs the protein to the chloroplast.

It localises to the plastid. The protein localises to the chloroplast. This is an uncharacterized protein from Arabidopsis thaliana (Mouse-ear cress).